The chain runs to 527 residues: Methane monooxygenase component A alpha chain (527 aa).

Fe cation-binding residues include E114, E144, and H147. C151 is an active-site residue. Positions 209, 243, and 246 each coordinate Fe cation.

It belongs to the TmoA/XamoA family. M.capsulatus has two forms of methane monooxygenase, a soluble and a membrane-bound type. The soluble type consists of four components (A to D): protein A, comprising three chains, in an alpha-2, beta-2, gamma-2 configuration, is a nonheme iron protein containing an unusual mu-hydroxo bridge structure at its active site and interacts with both oxygen and methane. Requires Fe cation as cofactor.

It carries out the reaction methane + NADH + O2 + H(+) = methanol + NAD(+) + H2O. The enzyme catalyses methane + NADPH + O2 + H(+) = methanol + NADP(+) + H2O. Functionally, responsible for the initial oxygenation of methane to methanol in methanotrophs. It also catalyzes the monohydroxylation of a variety of unactivated alkenes, alicyclic, aromatic and heterocyclic compounds. The protein is Methane monooxygenase component A alpha chain (mmoX) of Methylococcus capsulatus (strain ATCC 33009 / NCIMB 11132 / Bath).